A 491-amino-acid chain; its full sequence is UDP-N-acetylmuramate--L-alanine ligase (491 aa).

ATP is bound at residue 115-121 (GTHGKTT).

It belongs to the MurCDEF family.

Its subcellular location is the cytoplasm. The catalysed reaction is UDP-N-acetyl-alpha-D-muramate + L-alanine + ATP = UDP-N-acetyl-alpha-D-muramoyl-L-alanine + ADP + phosphate + H(+). Its pathway is cell wall biogenesis; peptidoglycan biosynthesis. Cell wall formation. In Parvibaculum lavamentivorans (strain DS-1 / DSM 13023 / NCIMB 13966), this protein is UDP-N-acetylmuramate--L-alanine ligase.